We begin with the raw amino-acid sequence, 1051 residues long: MAALRALLLLLAVGAQAAIRFAKEPYSQDALHGRSAILRCEVEEPAHVEFEWLQNGLPIQDTEQRFKEGSNLQFAAVDRHRDAGSFQCVARNVQTGEEARTANASFNIKWMETGSVVLKQPASAAEIQPSSTVVLRCHIDGHPRPTWQWFRDGAPLPDGRGTYSVSSKERTLTLRGAGPDDNGLYYCSARPRAVGSVCSQDNFTLNIIDESFPQAVVVPEDLIVTKNEEAMFDCQFAAVPPPTQEWLFEDSPITNRSKTTVFANGSLLITQVKARSTGVYKCIGHGQKGKALVLKATLRLAEIEEMAPFSPKVLTANQGHRVSCACPRGVPTPQVWWERNQERVPTAGRVYQEAEQLVFTSITEADAGIYTCHAANKAGEKKQELSITVATVPKWVEMPKDSQLEESKPGYLHCLSKASLKPTVTWYRNGVSISEDSRFEISENGTLRINNVEVYDGTMYKCVSSTPAGSIEGYARVHVLEKLKFTPPPQPLQCMEFNKEVTVSCSATGREKPTIQWTKTDGSSLPSHVSHRAGILSFHKVSRSDSGNYTCIASNSPQGEIRATVQLVVAVYVTFKLEPEPTTVYQGHTAMFQCQAEGDPVPHIQWKGKDKILDPSKLLPRIQIMPNGSLVIYDVTTEDSGKYTCIAGNSCNIKHREAFLYVVDKPAAEEDEGPSSHTPYKMIQTIGLSVGAAVAYIIIVLGLMFYCKKRRKAKRLKKHPEGEEPEMECLNGGTLLQNGQTTAEIQEEVALTNLGSSSGASKRHSARDKMHFPRSNLQTITTLGRGEFGEVFLAKAKGAEDAEGEALVLVKSLQTRDEQLQLDFRREAEMFGKLNHVNVVRLLGLCREAEPHYMVLEYVDLGDLKQFLRISKSKDESLKPQPLSTKHKVSLCTQVALGMEHLSNGRFVHRDLAARNCLVSAQRQVKVSALSLSKDVYNSEYYHFRQAWIPLRWMPPEAVLEDEFSTKSDVWSFGVLMWEVFTQGEMPYAPLADDEVLAGLKSGKTKLPQPEGCPSRLTKLMQRCWAPSPKDRPSFSELAAALGDSPADSKA.

The signal sequence occupies residues 1–22 (MAALRALLLLLAVGAQAAIRFA). 7 Ig-like C2-type domains span residues 23 to 105 (KEPY…ANAS), 115 to 204 (SVVL…DNFT), 213 to 298 (PQAV…KATL), 308 to 388 (PFSP…LSIT), 393 to 472 (PKWV…GSIE), 487 to 566 (PPPQ…ATVQ), and 573 to 661 (VTFK…AFLY). At 23 to 685 (KEPYSQDALH…SHTPYKMIQT (663 aa)) the chain is on the extracellular side. A disulfide bond links Cys40 and Cys88. N-linked (GlcNAc...) asparagine glycosylation occurs at Asn103. The cysteines at positions 137 and 187 are disulfide-linked. Asn202, Asn255, and Asn264 each carry an N-linked (GlcNAc...) asparagine glycan. 5 cysteine pairs are disulfide-bonded: Cys234/Cys282, Cys326/Cys372, Cys414/Cys462, Cys505/Cys551, and Cys594/Cys645. Asn444, Asn548, and Asn627 each carry an N-linked (GlcNAc...) asparagine glycan. The chain crosses the membrane as a helical span at residues 686–706 (IGLSVGAAVAYIIIVLGLMFY). Topologically, residues 707-1051 (CKKRRKAKRL…LGDSPADSKA (345 aa)) are cytoplasmic. Residues 777–1048 (LQTITTLGRG…AAALGDSPAD (272 aa)) enclose the Protein kinase; inactive domain.

This sequence belongs to the protein kinase superfamily. Tyr protein kinase family. Insulin receptor subfamily. Expressed in bone marrow, spleen, bursa, thymus and brain. Weakly expressed in fibroblasts. Also expressed in embryonic liver.

It is found in the membrane. In terms of biological role, inactive tyrosine kinase involved in Wnt signaling. pathway. This chain is Inactive tyrosine-protein kinase 7 (PTK7), found in Gallus gallus (Chicken).